Reading from the N-terminus, the 432-residue chain is 23S rRNA (uracil(1939)-C(5))-methyltransferase RlmD (432 aa).

Residues 10–68 (RVTTREIITVTTDGLDAFGQGVARHHGKALFIAGLLPGERAEVVLSEDKKQFARGDVKK) enclose the TRAM domain. C81, C87, C90, and C162 together coordinate [4Fe-4S] cluster. 6 residues coordinate S-adenosyl-L-methionine: Q265, F294, N299, E315, N342, and D363. The active-site Nucleophile is the C389.

It belongs to the class I-like SAM-binding methyltransferase superfamily. RNA M5U methyltransferase family. RlmD subfamily.

It catalyses the reaction uridine(1939) in 23S rRNA + S-adenosyl-L-methionine = 5-methyluridine(1939) in 23S rRNA + S-adenosyl-L-homocysteine + H(+). Its function is as follows. Catalyzes the formation of 5-methyl-uridine at position 1939 (m5U1939) in 23S rRNA. The protein is 23S rRNA (uracil(1939)-C(5))-methyltransferase RlmD of Cronobacter sakazakii (strain ATCC BAA-894) (Enterobacter sakazakii).